The sequence spans 120 residues: NADH dehydrogenase [ubiquinone] 1 subunit C2 (120 aa).

N-acetylmethionine is present on Met1. The helical transmembrane segment at 57–76 threads the bilayer; it reads GLHRQLLYITSFVFVGYYLL.

Belongs to the complex I NDUFC2 subunit family. As to quaternary structure, complex I is composed of 45 different subunits. Interacts with TMEM242. Post-translationally, there is a minor unacetylated form of subunit B14.5b.

The protein localises to the mitochondrion inner membrane. In terms of biological role, accessory subunit of the mitochondrial membrane respiratory chain NADH dehydrogenase (Complex I), that is believed not to be involved in catalysis but required for the complex assembly. Complex I functions in the transfer of electrons from NADH to the respiratory chain. The immediate electron acceptor for the enzyme is believed to be ubiquinone. The chain is NADH dehydrogenase [ubiquinone] 1 subunit C2 from Bos taurus (Bovine).